The sequence spans 82 residues: ETGEELYKTKGCTVCHAIDSKLVGPSFKEVTAKYAGQAGIADTLAAKIKAGGSGNWGQIPMPPNPVSEAEAKTLAEWVLTHK.

Residues Cys-12, Cys-15, His-16, and Met-61 each coordinate heme c.

Post-translationally, binds 1 heme c group covalently per subunit.

The protein is Cytochrome c-551 of Azotobacter vinelandii.